A 145-amino-acid polypeptide reads, in one-letter code: Sporulation-specific cell division protein Francci3_3418 (145 aa).

This sequence belongs to the SsgA family.

Its subcellular location is the cell septum. In terms of biological role, involved in sporulation-specific cell division. This Frankia casuarinae (strain DSM 45818 / CECT 9043 / HFP020203 / CcI3) protein is Sporulation-specific cell division protein Francci3_3418.